The primary structure comprises 547 residues: Chaperonin GroEL (547 aa).

ATP-binding positions include 30-33 (TLGP), Lys51, 87-91 (DGTTT), Gly415, and Asp495.

The protein belongs to the chaperonin (HSP60) family. In terms of assembly, forms a cylinder of 14 subunits composed of two heptameric rings stacked back-to-back. Interacts with the co-chaperonin GroES.

Its subcellular location is the cytoplasm. It catalyses the reaction ATP + H2O + a folded polypeptide = ADP + phosphate + an unfolded polypeptide.. In terms of biological role, together with its co-chaperonin GroES, plays an essential role in assisting protein folding. The GroEL-GroES system forms a nano-cage that allows encapsulation of the non-native substrate proteins and provides a physical environment optimized to promote and accelerate protein folding. In Rhizobium leguminosarum bv. trifolii (strain WSM2304), this protein is Chaperonin GroEL.